We begin with the raw amino-acid sequence, 337 residues long: uncharacterized protein (337 aa).

The tract at residues 291–314 is disordered; sequence NKTRQCSNTKTTTKSTMTPINNGF. A compositionally biased stretch (low complexity) spans 299–308; the sequence is TKTTTKSTMT.

This is an uncharacterized protein from Acanthamoeba polyphaga mimivirus (APMV).